The chain runs to 171 residues: Plastocyanin minor isoform, chloroplastic (171 aa).

The Plastocyanin-like domain occupies 73 to 171 (MEVLLGSDDG…AGMVGKLTVK (99 aa)). Cu cation contacts are provided by His109, Cys156, His159, and Met164.

This sequence belongs to the plastocyanin family. Requires Cu(2+) as cofactor.

It localises to the plastid. The protein resides in the chloroplast thylakoid membrane. Its function is as follows. Participates in electron transfer between P700 and the cytochrome b6-f complex in photosystem I. Seems to be a minor plastocyanin in Arabidopsis. The protein is Plastocyanin minor isoform, chloroplastic (PETE) of Arabidopsis thaliana (Mouse-ear cress).